A 371-amino-acid polypeptide reads, in one-letter code: MASVQLQNVTKAWGEVVVSKDINLDIHEGEFVVFVGPSGCGKSTLLRMIAGLETITSGDLFIGEKRMNDTPPAERGVGMVFQSYALYPHLSVAENMSFGLKLAGAKKEVINQRVNQVAEVLQLVHLLDRKPKALSGGQRQRVAIGRTLVAEPSVFLLDEPLSNLDAALRVQMRIEISRLHKRLGRTMIYVTHDQVEAMTLADKIVVLDAGRVAQVGKPLELYHYPADRFVAGFIGSPKMNFLPVKVTATAIDQVQVELPMPNRQQVWLPVESRDVQVGANMSLGIRPEHLLPSDIADVILEGEVQVVEQLGNETQIYIQIPSIRQNLVYRQNDVVLVEEGATFAIGLPPERCHLFREDGTACRRLHKEPGV.

Positions 4-234 constitute an ABC transporter domain; it reads VQLQNVTKAW…PADRFVAGFI (231 aa). 36–43 is an ATP binding site; sequence GPSGCGKS.

The protein belongs to the ABC transporter superfamily. Maltooligosaccharide importer (TC 3.A.1.1.1) family. In terms of assembly, the complex is composed of two ATP-binding proteins (MalK), two transmembrane proteins (MalG and MalK) and a solute-binding protein (MalE).

The protein resides in the cell inner membrane. The catalysed reaction is D-maltose(out) + ATP + H2O = D-maltose(in) + ADP + phosphate + H(+). In terms of biological role, part of the ABC transporter complex MalEFGK involved in maltose/maltodextrin import. Responsible for energy coupling to the transport system. This Shigella flexneri serotype 5b (strain 8401) protein is Maltose/maltodextrin import ATP-binding protein MalK.